The chain runs to 167 residues: Methylated-DNA--protein-cysteine methyltransferase (167 aa).

Residue Cys-128 is the Nucleophile; methyl group acceptor of the active site.

Belongs to the MGMT family.

It is found in the cytoplasm. It carries out the reaction a 6-O-methyl-2'-deoxyguanosine in DNA + L-cysteinyl-[protein] = S-methyl-L-cysteinyl-[protein] + a 2'-deoxyguanosine in DNA. It catalyses the reaction a 4-O-methyl-thymidine in DNA + L-cysteinyl-[protein] = a thymidine in DNA + S-methyl-L-cysteinyl-[protein]. Its function is as follows. Involved in the cellular defense against the biological effects of O6-methylguanine (O6-MeG) and O4-methylthymine (O4-MeT) in DNA. Repairs the methylated nucleobase in DNA by stoichiometrically transferring the methyl group to a cysteine residue in the enzyme. This is a suicide reaction: the enzyme is irreversibly inactivated. The sequence is that of Methylated-DNA--protein-cysteine methyltransferase from Methanocaldococcus jannaschii (strain ATCC 43067 / DSM 2661 / JAL-1 / JCM 10045 / NBRC 100440) (Methanococcus jannaschii).